Consider the following 229-residue polypeptide: MKLSFHGQSTIYLEGNNKKVIVDPFISNNPKCDLNIETVQVDYIVLTHGHFDHFGDVVELAKKTGATVIGSAEMADYLSSYHGVENVHGMNIGGKANFDFGSVKFVQAFHSSSFTHENGIPVYLGMPIGIVFEVEGKTIYHTGDTGLFSDMSLIAKRHPVDVCFVPIGDNFTMGIDDASYAINEFIKPKISVPIHYDTFPLIEQDPQQFKDAVNVGDVQILKPGESVQF.

It belongs to the UPF0173 family.

The sequence is that of UPF0173 metal-dependent hydrolase SAB1566c from Staphylococcus aureus (strain bovine RF122 / ET3-1).